Consider the following 254-residue polypeptide: MNKLFSFWKRKNETRSQGYNLREKDLKKLHRAASVGDLKKLKEYLQIKKYDVNMQDKKYRTPLHLACANGHTDVVLFLIEQQCKINVRDSENKSPLIKAVQCQNEDCATILLNFGADPDLRDIRYNTVLHYAVCGQSLSLVEKLLEYEADLEAKNKDGYTPLLVAVINNNPKMVKFLLEKGADVNASDNYQRTALILAVSGEPPCLVKLLLQQGVELCYEGIVDSQLRNMFISMVLLHRYPQFTASHGKKKHAK.

ANK repeat units lie at residues 58-87 (KYRT…KINV), 91-120 (ENKS…DPDL), 124-153 (RYNT…DLEA), 157-186 (DGYT…DVNA), and 190-219 (YQRT…ELCY).

In terms of tissue distribution, testis specific.

This chain is Ankyrin repeat domain-containing protein 7 (ANKRD7), found in Homo sapiens (Human).